The primary structure comprises 266 residues: Hydroxyethylthiazole kinase (266 aa).

Position 41 (Met-41) interacts with substrate. Positions 117 and 163 each coordinate ATP. Ala-190 serves as a coordination point for substrate.

The protein belongs to the Thz kinase family. It depends on Mg(2+) as a cofactor.

It carries out the reaction 5-(2-hydroxyethyl)-4-methylthiazole + ATP = 4-methyl-5-(2-phosphooxyethyl)-thiazole + ADP + H(+). It functions in the pathway cofactor biosynthesis; thiamine diphosphate biosynthesis; 4-methyl-5-(2-phosphoethyl)-thiazole from 5-(2-hydroxyethyl)-4-methylthiazole: step 1/1. Functionally, catalyzes the phosphorylation of the hydroxyl group of 4-methyl-5-beta-hydroxyethylthiazole (THZ). The chain is Hydroxyethylthiazole kinase from Histophilus somni (strain 129Pt) (Haemophilus somnus).